The primary structure comprises 344 residues: Cell cycle control protein 50C (344 aa).

At 1 to 34 (MEETPQHCLSRLPDNSALKQQELPAHRLYFTARR) the chain is on the cytoplasmic side. The helical transmembrane segment at 35–55 (VLFVFFTTGIFCLCMGIILIL) threads the bilayer. The Extracellular segment spans residues 56–306 (SARSTQEIEI…STLTWCGGNS (251 aa)). Residues Asn66 and Asn261 are each glycosylated (N-linked (GlcNAc...) asparagine). A helical transmembrane segment spans residues 307 to 327 (LFLGLAYTVTGAITWLASFTM). The Cytoplasmic portion of the chain corresponds to 328–344 (MAIHITLKNKQMSFFHQ).

The protein belongs to the CDC50/LEM3 family. In terms of tissue distribution, specifically expressed in testis.

Its subcellular location is the membrane. In Macaca fascicularis (Crab-eating macaque), this protein is Cell cycle control protein 50C (TMEM30C).